The sequence spans 300 residues: MNYYSINLAKAHLLHYPCPLNINFLWNYGFLLGIVFFIQILKGVLLALVILQKLSYAYYSVQHILRAIMDGWCFRYMHATGASFVFILTYLHILRGLNYSYSYLPLSWISGLMIFLISIVTAFYGYVLPWGQMSFWNTTVITNLLYLFRTCFMDCGGYLVSDPTLKRFFVFIYFPFIALCQSLFGILPLSHPDNAITVDRYATPLHIVPEWYFLPFYAMLKTIPNKTAGLLVMLASLQILFLLAEQRNLTTLIHFKFAFGAREYSVPTICYMSSMLIWIGCQLPQILHFIWSFIYYIILF.

Transmembrane regions (helical) follow at residues 28-48 (YGFL…LLAL), 72-94 (WCFR…LHIL), 107-127 (SWIS…YGYV), 168-187 (FFVF…FGIL), 223-243 (IPNK…LFLL), and 279-299 (IGCQ…YIIL). Residues His-78 and His-92 each coordinate heme b.

The protein belongs to the cytochrome b family. In terms of assembly, the main subunits of complex b-c1 are: cytochrome b, cytochrome c1 and the Rieske protein. Heme b serves as cofactor.

Its subcellular location is the mitochondrion inner membrane. Its function is as follows. Component of the ubiquinol-cytochrome c reductase complex (complex III or cytochrome b-c1 complex) that is part of the mitochondrial respiratory chain. The b-c1 complex mediates electron transfer from ubiquinol to cytochrome c. Contributes to the generation of a proton gradient across the mitochondrial membrane that is then used for ATP synthesis. The protein is Cytochrome b (MT-CYB) of Plasmodium gallinaceum.